A 591-amino-acid chain; its full sequence is Aspartate--tRNA(Asp/Asn) ligase (591 aa).

Glutamate 174 provides a ligand contact to L-aspartate. The segment at 198-201 is aspartate; it reads QLFK. Residue arginine 220 coordinates L-aspartate. Residues 220 to 222 and glutamine 229 each bind ATP; that span reads RDE. Residue histidine 450 participates in L-aspartate binding. Glutamate 483 contributes to the ATP binding site. Arginine 490 contacts L-aspartate. 535–538 lines the ATP pocket; sequence GLDR.

It belongs to the class-II aminoacyl-tRNA synthetase family. Type 1 subfamily. As to quaternary structure, homodimer.

Its subcellular location is the cytoplasm. It carries out the reaction tRNA(Asx) + L-aspartate + ATP = L-aspartyl-tRNA(Asx) + AMP + diphosphate. Its function is as follows. Aspartyl-tRNA synthetase with relaxed tRNA specificity since it is able to aspartylate not only its cognate tRNA(Asp) but also tRNA(Asn). Reaction proceeds in two steps: L-aspartate is first activated by ATP to form Asp-AMP and then transferred to the acceptor end of tRNA(Asp/Asn). This chain is Aspartate--tRNA(Asp/Asn) ligase, found in Pseudomonas syringae pv. syringae (strain B728a).